A 178-amino-acid chain; its full sequence is Transmembrane protein 196 (178 aa).

4 helical membrane-spanning segments follow: residues 11–31 (LLVL…VGAV), 47–67 (SSPV…ILCA), 73–93 (LVMI…ILNF), and 106–126 (LYPL…GCTL).

As to expression, expression is significantly decreased in lung cancer cells compared to normal lung tissue (at protein level).

Its subcellular location is the cytoplasm. It localises to the membrane. Its function is as follows. Acts as a tumor suppressor in lung cancer. Inhibits tumor cell growth by inhibiting cell proliferation and migration and promoting cell apoptosis. Inhibits metastasis of lung cancer by suppressing beta-catenin expression in the Wnt/beta-catenin signaling pathway. In Homo sapiens (Human), this protein is Transmembrane protein 196 (TMEM196).